The sequence spans 145 residues: Peptide methionine sulfoxide reductase MsrB (145 aa).

The region spanning 6-129 is the MsrB domain; it reads KNERLKQLTD…NSAALRFIPV (124 aa). Cysteine 118 acts as the Nucleophile in catalysis.

It belongs to the MsrB Met sulfoxide reductase family.

It catalyses the reaction L-methionyl-[protein] + [thioredoxin]-disulfide + H2O = L-methionyl-(R)-S-oxide-[protein] + [thioredoxin]-dithiol. In Listeria welshimeri serovar 6b (strain ATCC 35897 / DSM 20650 / CCUG 15529 / CIP 8149 / NCTC 11857 / SLCC 5334 / V8), this protein is Peptide methionine sulfoxide reductase MsrB.